The following is a 140-amino-acid chain: Transcription antitermination protein NusB (140 aa).

The protein belongs to the NusB family.

In terms of biological role, involved in transcription antitermination. Required for transcription of ribosomal RNA (rRNA) genes. Binds specifically to the boxA antiterminator sequence of the ribosomal RNA (rrn) operons. In Streptococcus pneumoniae (strain 70585), this protein is Transcription antitermination protein NusB.